The primary structure comprises 108 residues: MNEPTRTYLESEKDTQDQIEELQATCIVKNAAGIHVRPAGVIVRLFDGEPCDVHFTYAGKTINAKSIMSILMLGAPQGGEILVTIRSKEAHRILQKIQDAFSSGFGEL.

In terms of domain architecture, HPr spans 21–108 (ELQATCIVKN…DAFSSGFGEL (88 aa)). Residue His-35 is the Pros-phosphohistidine intermediate of the active site.

This sequence belongs to the HPr family.

Its subcellular location is the cytoplasm. General (non sugar-specific) component of the phosphoenolpyruvate-dependent sugar phosphotransferase system (sugar PTS). This major carbohydrate active-transport system catalyzes the phosphorylation of incoming sugar substrates concomitantly with their translocation across the cell membrane. The phosphoryl group from phosphoenolpyruvate (PEP) is transferred to the phosphoryl carrier protein HPr by enzyme I. Phospho-HPr then transfers it to the PTS EIIA domain. The chain is Phosphocarrier protein HPr (ptsH) from Chlamydia pneumoniae (Chlamydophila pneumoniae).